Consider the following 630-residue polypeptide: Internalin B (630 aa).

Positions 1–30 (MKEKHNPRRKYCLISGLAIIFSLWIIIGNG) are cleaved as a signal peptide. An LRRNT domain is found at 31-76 (AKVQAETITVPTPIKQIFSDDAFAETIKDNLKKKSVTDAVTQNELN). LRR repeat units lie at residues 75–97 (LNSI…IQYL), 98–121 (PNVT…NLKN), 123–141 (GWLF…LKDL), 142–163 (KKLK…LVHL), 164–187 (PQLE…RLTK), 189–207 (DTLS…LAGL), and 208–231 (TKLQ…GLKN). The interval 241–319 (ECLNKPINHQ…RFHGRVTQPL (79 aa)) is ig-like region. The region spanning 241 to 330 (ECLNKPINHQ…EVYTVSYDVD (90 aa)) is the LRRCT domain. Positions 320–392 (KEVYTVSYDV…TLYAVFKAET (73 aa)) are b repeat region. GW domains lie at 393 to 467 (TEKA…LDRY), 472 to 550 (YDKG…TFYK), and 553 to 630 (MEKP…RAQK). The segment at 399–630 (LTRYVKYIRG…TKAANLRAQK (232 aa)) is GW repeat region, necessary and sufficient for cell surface attachment, interacts with host C1QBP and with heparin.

The protein belongs to the internalin family. In terms of assembly, interacts via its LRR repeats plus the Ig-like region with the extracellular portion (residues 25-741) of its receptor MET; MET can bind HGF, its endogenous ligand, and InlB simultaneously. Probably forms a dimer upon interaction with host MET, which subsequently allows dimerization of the host MET and subsequent host signaling; dimerization probably occurs via the convex surface of InlB. Prevention of dimerization does not block interaction with MET but prevents downstream action.

The protein localises to the secreted. It localises to the cytoplasm. The protein resides in the cell membrane. Its function is as follows. Mediates the entry of L.monocytogenes into normally non-phagocytic mammalian host cells. Its host receptor is hepatocyte growth factor receptor (HGF receptor, a tyrosine kinase, MET) which is tyrosine-phosphorylated in response to InlB. Downstream targets MAPK1/MAPK3 (Erk1/2) and AKT are phosphorylated in response to InlB, which also causes cell colony scattering. Complement component 1 Q subcomponent-binding protein (gC1q-R, C1QBP) has been suggested to also act an InlB receptor, but this is less certain. Stimulation of Tyr-phosphorylation of MET by InlB is potentiated by the InlB GW domains and glycosaminoglycans such as heparin. The chain is Internalin B (inlB) from Listeria monocytogenes serovar 1/2a (strain ATCC BAA-679 / EGD-e).